The chain runs to 193 residues: Mediator of RNA polymerase II transcription subunit 20 (193 aa).

It belongs to the Mediator complex subunit 20 family. As to quaternary structure, component of the Mediator complex.

It localises to the nucleus. Component of the Mediator complex, a coactivator involved in the regulated transcription of nearly all RNA polymerase II-dependent genes. Mediator functions as a bridge to convey information from gene-specific regulatory proteins to the basal RNA polymerase II transcription machinery. The Mediator complex, having a compact conformation in its free form, is recruited to promoters by direct interactions with regulatory proteins and serves for the assembly of a functional preinitiation complex with RNA polymerase II and the general transcription factors. The protein is Mediator of RNA polymerase II transcription subunit 20 (med20) of Schizosaccharomyces pombe (strain 972 / ATCC 24843) (Fission yeast).